Here is a 368-residue protein sequence, read N- to C-terminus: ATP-dependent (S)-NAD(P)H-hydrate dehydratase (368 aa).

The 345-residue stretch at 13 to 357 (LFKKVRKIVP…DEVHESFLEL (345 aa)) folds into the YjeF C-terminal domain. (6S)-NADPHX contacts are provided by residues Gly125 and 178-184 (NVNEFSR). Residues 231-235 (KGPHD) and 250-259 (GGLKRSGGQG) contribute to the ATP site. Residue Asp260 coordinates (6S)-NADPHX.

Belongs to the NnrD/CARKD family. It depends on Mg(2+) as a cofactor.

Its subcellular location is the cytoplasm. The enzyme catalyses (6S)-NADHX + ATP = ADP + phosphate + NADH + H(+). It catalyses the reaction (6S)-NADPHX + ATP = ADP + phosphate + NADPH + H(+). Its function is as follows. Catalyzes the dehydration of the S-form of NAD(P)HX at the expense of ATP, which is converted to ADP. Together with NAD(P)HX epimerase, which catalyzes the epimerization of the S- and R-forms, the enzyme allows the repair of both epimers of NAD(P)HX, a damaged form of NAD(P)H that is a result of enzymatic or heat-dependent hydration. The sequence is that of ATP-dependent (S)-NAD(P)H-hydrate dehydratase from Aspergillus fumigatus (strain ATCC MYA-4609 / CBS 101355 / FGSC A1100 / Af293) (Neosartorya fumigata).